The sequence spans 154 residues: Large ribosomal subunit protein uL13 (154 aa).

This sequence belongs to the universal ribosomal protein uL13 family. Part of the 50S ribosomal subunit.

Its function is as follows. This protein is one of the early assembly proteins of the 50S ribosomal subunit, although it is not seen to bind rRNA by itself. It is important during the early stages of 50S assembly. This Cereibacter sphaeroides (strain ATCC 17029 / ATH 2.4.9) (Rhodobacter sphaeroides) protein is Large ribosomal subunit protein uL13.